We begin with the raw amino-acid sequence, 264 residues long: Zinc import ATP-binding protein ZnuC (264 aa).

An ABC transporter domain is found at 11–226 (IELKGVNVTF…PVFIRFFGNQ (216 aa)). 43 to 50 (GPNGGGKS) is a binding site for ATP.

It belongs to the ABC transporter superfamily. Zinc importer (TC 3.A.1.15.5) family. In terms of assembly, the complex is composed of two ATP-binding proteins (ZnuC), two transmembrane proteins (ZnuB) and a solute-binding protein (ZnuA).

The protein localises to the cell inner membrane. It carries out the reaction Zn(2+)(out) + ATP(in) + H2O(in) = Zn(2+)(in) + ADP(in) + phosphate(in) + H(+)(in). Functionally, part of the ABC transporter complex ZnuABC involved in zinc import. Responsible for energy coupling to the transport system. In Histophilus somni (strain 129Pt) (Haemophilus somnus), this protein is Zinc import ATP-binding protein ZnuC.